Consider the following 198-residue polypeptide: Autophagy-related protein 16 (198 aa).

Positions glutamate 24 to lysine 177 form a coiled coil.

Belongs to the ATG16 family. As to quaternary structure, homodimer. Part of the ATG5-ATG12/ATG16 complex. Several units of each may be present in this complex. Interacts directly with ATG12.

It localises to the preautophagosomal structure membrane. Functionally, stabilizes the ATG5-ATG12 conjugate. The ATG5-ATG12/ATG16 complex is required for efficient promotion of ATG8-conjugation to phosphatidylethanolamine and ATG8 localization to the pre-autophagosomal structure (PAS). Also recruits ATG3 to the PAS. Involved in endoplasmic reticulum-specific autophagic process and is essential for the survival of cells subjected to severe ER stress. Autophagy is required for proper vegetative growth, asexual/sexual reproduction, and full virulence. Autophagy is particularly involved in the biosynthesis of deoxynivalenol (DON), an important virulence determinant. This Gibberella zeae (strain ATCC MYA-4620 / CBS 123657 / FGSC 9075 / NRRL 31084 / PH-1) (Wheat head blight fungus) protein is Autophagy-related protein 16.